Here is a 156-residue protein sequence, read N- to C-terminus: Lipoprotein signal peptidase (156 aa).

Helical transmembrane passes span 5–25 (FKFI…DQWV), 64–84 (YLHL…RTLL), and 89–109 (IAFG…FIHG). Catalysis depends on residues Asp-113 and Asp-130. Residues 122–142 (NFAIFNVADVMINISVALILI) form a helical membrane-spanning segment.

The protein belongs to the peptidase A8 family.

The protein localises to the cell inner membrane. It carries out the reaction Release of signal peptides from bacterial membrane prolipoproteins. Hydrolyzes -Xaa-Yaa-Zaa-|-(S,diacylglyceryl)Cys-, in which Xaa is hydrophobic (preferably Leu), and Yaa (Ala or Ser) and Zaa (Gly or Ala) have small, neutral side chains.. It participates in protein modification; lipoprotein biosynthesis (signal peptide cleavage). This protein specifically catalyzes the removal of signal peptides from prolipoproteins. The chain is Lipoprotein signal peptidase from Campylobacter jejuni subsp. jejuni serotype O:2 (strain ATCC 700819 / NCTC 11168).